Consider the following 766-residue polypeptide: Protein zer-1 homolog (766 aa).

Ala2 is subject to N-acetylalanine. 3 LRR repeats span residues Ser226 to Leu245, His246 to Arg268, and Leu278 to Glu302. ARM repeat units follow at residues Arg427–Ile467, Asp511–Asp556, Thr558–Glu600, Lys602–Phe643, and Pro714–Asn756.

The protein belongs to the zyg-11 family. Interacts with the ELOC-ELOB/Elongin BC complex. Part of an E3 ubiquitin ligase complex including ZER1, CUL2 and Elongin BC. As to expression, expressed in testis, spermatocytes and spermatids (at protein level). Expressed in spermatocytes, spermatids, prostate, skeletal muscle, ovary, small intestine, heart, brain and pancreas.

Its function is as follows. Serves as substrate adapter subunit in the E3 ubiquitin ligase complex ZYG11B-CUL2-Elongin BC. Acts to target substrates bearing N-terminal degrons for proteasomal degradation with the first four residues of substrates being the key recognition elements. Involved in the clearance of proteolytic fragments generated by caspase cleavage during apoptosis since N-terminal glycine degrons are strongly enriched at caspase cleavage sites. Also important in the quality control of protein N-myristoylation in which N-terminal glycine degrons are conditionally exposed after a failure of N-myristoylation. The polypeptide is Protein zer-1 homolog (Homo sapiens (Human)).